A 282-amino-acid polypeptide reads, in one-letter code: MAITAAMVKELRERTAAGMMDCKNALVEAEGDMELAIENMRKNGQAKAAKKAGNIAAEGAILIKTTDGLAALVEVNCQTDFVAKDDNFLGFANEVADAALASKVTIAELQAQFEEKRITLVTKIGENINIRRVEYVEGANLASYSHGATIGVVVAGEGDAESLKHIAMHVAASKPEFLTPDDVPADVVANEKRIQIEMAMNEGKPQEIAEKMVTGRMKKFTGEVSLTGQAFIMEPKKTVGVILTEKGITVSNFVRLEVGEGIEKKEEDFAAEVEAQIAAAKA.

An involved in Mg(2+) ion dislocation from EF-Tu region spans residues 79 to 82; sequence TDFV.

It belongs to the EF-Ts family.

The protein localises to the cytoplasm. Its function is as follows. Associates with the EF-Tu.GDP complex and induces the exchange of GDP to GTP. It remains bound to the aminoacyl-tRNA.EF-Tu.GTP complex up to the GTP hydrolysis stage on the ribosome. The chain is Elongation factor Ts from Colwellia psychrerythraea (strain 34H / ATCC BAA-681) (Vibrio psychroerythus).